The chain runs to 280 residues: B3 domain-containing protein At5g25470 (280 aa).

Residues W20–D114 constitute a DNA-binding region (TF-B3 1). Residues P122–A153 form a disordered region. A DNA-binding region (TF-B3 2) is located at residues Y183 to F276.

It localises to the nucleus. The polypeptide is B3 domain-containing protein At5g25470 (Arabidopsis thaliana (Mouse-ear cress)).